Here is a 297-residue protein sequence, read N- to C-terminus: uncharacterized protein (297 aa).

The disordered stretch occupies residues 175–199; it reads VLPTNRNNPVRSNVDIKPVNPPSSK. A compositionally biased stretch (polar residues) spans 176–185; sequence LPTNRNNPVR. The N-linked (GlcNAc...) asparagine; by host glycan is linked to N269. Residues 277–297 form a helical membrane-spanning segment; it reads LFGSPVLLICVASLLLLIIIL.

The protein belongs to the ascovirus HvAV ORF18 family.

The protein localises to the membrane. This is an uncharacterized protein from Noctuidae (owlet moths).